A 264-amino-acid chain; its full sequence is Glutamate racemase (264 aa).

Residues Asp11–Ser12 and Tyr43–Gly44 contribute to the substrate site. Residue Cys74 is the Proton donor/acceptor of the active site. Asn75–Thr76 lines the substrate pocket. Cys193 acts as the Proton donor/acceptor in catalysis. Residue Thr194–His195 participates in substrate binding.

It belongs to the aspartate/glutamate racemases family.

The catalysed reaction is L-glutamate = D-glutamate. The protein operates within cell wall biogenesis; peptidoglycan biosynthesis. In terms of biological role, provides the (R)-glutamate required for cell wall biosynthesis. The sequence is that of Glutamate racemase from Bifidobacterium longum (strain DJO10A).